Reading from the N-terminus, the 333-residue chain is Fructose-1,6-bisphosphatase class 1 (333 aa).

Glu89, Asp110, Leu112, and Asp113 together coordinate Mg(2+). Substrate-binding positions include 113–116 (DGSS), Asn206, Tyr239, 257–259 (YLY), and Lys269. Residue Glu275 participates in Mg(2+) binding.

It belongs to the FBPase class 1 family. Homotetramer. The cofactor is Mg(2+).

It is found in the cytoplasm. It carries out the reaction beta-D-fructose 1,6-bisphosphate + H2O = beta-D-fructose 6-phosphate + phosphate. Its pathway is carbohydrate biosynthesis; gluconeogenesis. In Sodalis glossinidius (strain morsitans), this protein is Fructose-1,6-bisphosphatase class 1.